Reading from the N-terminus, the 128-residue chain is 3-aminoacrylate deaminase RutC (128 aa).

Belongs to the RutC family.

It catalyses the reaction (Z)-3-aminoacrylate + H2O + H(+) = 3-oxopropanoate + NH4(+). Involved in pyrimidine catabolism. Catalyzes the deamination of 3-aminoacrylate to malonic semialdehyde, a reaction that can also occur spontaneously. RutC may facilitate the reaction and modulate the metabolic fitness, rather than catalyzing essential functions. The sequence is that of 3-aminoacrylate deaminase RutC from Azorhizobium caulinodans (strain ATCC 43989 / DSM 5975 / JCM 20966 / LMG 6465 / NBRC 14845 / NCIMB 13405 / ORS 571).